The chain runs to 710 residues: Adenylosuccinate synthetase (710 aa).

The segment at 1–54 (MPVRRYGGRYNSSSPGVSNALNPSRTAGWPLSPSPATGSKPASTHHDPVPQEAY) is disordered. Positions 10–25 (YNSSSPGVSNALNPSR) are enriched in polar residues. The span at 44 to 54 (THHDPVPQEAY) shows a compositional bias: basic and acidic residues. GTP-binding positions include 180 to 186 (GDEGKGK) and 210 to 212 (GHT). The Proton acceptor role is filled by Asp-181. Mg(2+) is bound by residues Asp-181 and Gly-210. Residues 181-184 (DEGK), 208-211 (NAGH), Thr-295, Lys-309, Gln-421, Thr-437, and Lys-567 each bind IMP. Catalysis depends on His-211, which acts as the Proton donor. 563–569 (AVTKKPR) contributes to the substrate binding site. GTP-binding positions include Arg-569 and 697–699 (GNG).

This sequence belongs to the adenylosuccinate synthetase family. Homodimer. Mg(2+) is required as a cofactor.

The protein localises to the cytoplasm. It carries out the reaction IMP + L-aspartate + GTP = N(6)-(1,2-dicarboxyethyl)-AMP + GDP + phosphate + 2 H(+). It participates in purine metabolism; AMP biosynthesis via de novo pathway; AMP from IMP: step 1/2. Functionally, plays an important role in the salvage pathway for purine nucleotide biosynthesis. Catalyzes the first committed step in the biosynthesis of AMP from IMP. The chain is Adenylosuccinate synthetase from Leishmania major.